The following is a 572-amino-acid chain: Sulfite reductase [NADPH] hemoprotein beta-component (572 aa).

[4Fe-4S] cluster-binding residues include Cys-437, Cys-443, Cys-482, and Cys-486. Cys-486 provides a ligand contact to siroheme.

This sequence belongs to the nitrite and sulfite reductase 4Fe-4S domain family. Alpha(8)-beta(8). The alpha component is a flavoprotein, the beta component is a hemoprotein. Siroheme is required as a cofactor. The cofactor is [4Fe-4S] cluster.

It catalyses the reaction hydrogen sulfide + 3 NADP(+) + 3 H2O = sulfite + 3 NADPH + 4 H(+). Its pathway is sulfur metabolism; hydrogen sulfide biosynthesis; hydrogen sulfide from sulfite (NADPH route): step 1/1. Functionally, component of the sulfite reductase complex that catalyzes the 6-electron reduction of sulfite to sulfide. This is one of several activities required for the biosynthesis of L-cysteine from sulfate. The chain is Sulfite reductase [NADPH] hemoprotein beta-component from Staphylococcus epidermidis (strain ATCC 12228 / FDA PCI 1200).